We begin with the raw amino-acid sequence, 553 residues long: Mucolipin-3 (553 aa).

Topologically, residues 1–62 are cytoplasmic; the sequence is MANPEIVISS…FWARGRKPWK (62 aa). The segment at 52-62 is interaction with phosphoinositides; sequence KFWARGRKPWK. The helical transmembrane segment at 63–83 threads the bilayer; that stretch reads LAIQILKIAMVTIQLVLFGLS. Over 84-283 the chain is Extracellular; that stretch reads NQMVVAFKEE…VSGSIQKNTH (200 aa). The tract at residues 104–118 is extracellular/lumenal pore loop; sequence KGYIDRMDDTYAVYT. A glycan (N-linked (GlcNAc...) asparagine) is linked at Asn138. A disulfide bond links Cys159 and Cys185. Residue Asn205 is glycosylated (N-linked (GlcNAc...) asparagine). Cys238 and Cys269 are disulfide-bonded. The chain crosses the membrane as a helical span at residues 284 to 304; that stretch reads NMMIFDAFVILTCLVSLILCI. The Cytoplasmic segment spans residues 305-341; it reads RSVISGLQLQQEFVNFFLLHYKKDVSVSDQMEFVNGW. The chain crosses the membrane as a helical span at residues 342 to 362; it reads YIMIIISDILTIIGSILKMEI. The Extracellular segment spans residues 363–371; it reads QAKSLTSYD. Residues 372-392 form a helical membrane-spanning segment; it reads VCSILLGTSTMLVWLGVIRYL. Residues 393–414 are Cytoplasmic-facing; sequence GFFAKYNLLILTLQAALPNVIR. The helical transmembrane segment at 415–435 threads the bilayer; that stretch reads FCCCAAMIYLGYCFCGWIVLG. Residues 436–443 are Extracellular-facing; sequence PYHNKFRS. Residues 444 to 464 constitute an intramembrane region (pore-forming); the sequence is LNMVSECLFSLINGDDMFATF. Residues 456-459 carry the Selectivity filter motif; sequence NGDD. Residues 465–475 are Extracellular-facing; the sequence is AKMQQKSYLVW. The helical transmembrane segment at 476 to 497 threads the bilayer; it reads LFSRIYLYSFISLFIYMILSLF. At 498 to 553 the chain is on the cytoplasmic side; that stretch reads IALITDTYETIKHYQQDGFPETELRTFISECKDLPNSGKFRLEDDPPVSLFCCCKK.

It belongs to the transient receptor (TC 1.A.4) family. Polycystin subfamily. MCOLN3 sub-subfamily. Homotetramer. Can heterooligomerize with MCOLN1; heteromeric assemblies have different channel properties as compared to the respective homooligomers and may be tissue-specific. May heterooligomerize with TRPV5 to form a functional distinct ion channel. Interacts with GABARAPL2. In terms of processing, N-glycosylated.

It is found in the lysosome membrane. The protein resides in the early endosome membrane. It localises to the late endosome membrane. Its subcellular location is the cytoplasmic vesicle. The protein localises to the autophagosome membrane. It is found in the cell projection. The protein resides in the stereocilium membrane. The catalysed reaction is Ca(2+)(in) = Ca(2+)(out). It catalyses the reaction Mg(2+)(in) = Mg(2+)(out). It carries out the reaction K(+)(in) = K(+)(out). The enzyme catalyses Na(+)(in) = Na(+)(out). Channel activity is activated by PtdIns(3,5)P2 (phosphatidylinositol 3,5-bisphosphate). Inhibited by lumenal H(+) and Na(+). The channel pore shows dynamic behavior and undergoes spontaneous, Ca(2+)-dependent modulation when conducting Ca(2+). In terms of biological role, nonselective cation channel probably playing a role in the regulation of membrane trafficking events. Acts as a Ca(2+)-permeable cation channel with inwardly rectifying activity. Mediates release of Ca(2+) from endosomes to the cytoplasm, contributes to endosomal acidification and is involved in the regulation of membrane trafficking and fusion in the endosomal pathway. Also permeable to Mg(2+), Na(+) and K(+). Does not seem to act as mechanosensory transduction channel in inner ear sensory hair cells. Proposed to play a critical role at the cochlear stereocilia ankle-link region during hair-bundle growth. Involved in the regulation of autophagy. Through association with GABARAPL2 may be involved in autophagosome formation possibly providing Ca(2+) for the fusion process. Through a possible and probably tissue-specific heteromerization with MCOLN1 may be at least in part involved in many lysosome-dependent cellular events. Possible heteromeric ion channel assemblies with TRPV5 show pharmacological similarity with TRPML3. In Callithrix jacchus (White-tufted-ear marmoset), this protein is Mucolipin-3.